The following is a 469-amino-acid chain: tRNA(Ile)-lysidine synthase (469 aa).

Ser26–Ser31 serves as a coordination point for ATP.

Belongs to the tRNA(Ile)-lysidine synthase family.

It is found in the cytoplasm. It catalyses the reaction cytidine(34) in tRNA(Ile2) + L-lysine + ATP = lysidine(34) in tRNA(Ile2) + AMP + diphosphate + H(+). In terms of biological role, ligates lysine onto the cytidine present at position 34 of the AUA codon-specific tRNA(Ile) that contains the anticodon CAU, in an ATP-dependent manner. Cytidine is converted to lysidine, thus changing the amino acid specificity of the tRNA from methionine to isoleucine. The chain is tRNA(Ile)-lysidine synthase from Clostridium perfringens (strain 13 / Type A).